The sequence spans 150 residues: Deoxyuridine 5'-triphosphate nucleotidohydrolase (150 aa).

Substrate contacts are provided by residues 69-71, N82, 86-88, and K96; these read RSG and LID.

The protein belongs to the dUTPase family. Mg(2+) is required as a cofactor.

It carries out the reaction dUTP + H2O = dUMP + diphosphate + H(+). It participates in pyrimidine metabolism; dUMP biosynthesis; dUMP from dCTP (dUTP route): step 2/2. In terms of biological role, this enzyme is involved in nucleotide metabolism: it produces dUMP, the immediate precursor of thymidine nucleotides and it decreases the intracellular concentration of dUTP so that uracil cannot be incorporated into DNA. The sequence is that of Deoxyuridine 5'-triphosphate nucleotidohydrolase from Neisseria meningitidis serogroup A / serotype 4A (strain DSM 15465 / Z2491).